The chain runs to 451 residues: MKPTRFYQHRRVLVIGLAKSGAAAARLLAELGAKVVVNDQKPLSENMEAKQLEPLGIRVVCGGHPLELLDEPFDLVVKNPGIPYTNPMVKKALEKGLPVVTEVELAYHISEGSFIGITGSNGKTTTTTLIYEMLKADGQDPLLAGNIGLVACEVAREAKPGQWLVTELSSFQLAGIDKFRPAIAVLLNIFDAHLDYHGTKEAYAAAKANIFRNQTERDYAVVNADDPLVMNIASSVRSQKVLFSATKLLGEGAYVQDGAIYWNGDPVIRIADIVLPGQHNLENILAAVAAAKLAGASDEAIRQVLATFSGVKHRLQYVAEIDGRRFYNDSKATNILATQKALSAFAGEPVILLAGGLDRGNEFDDLLPYLQQVKAVVLFGQTADKIGRIAQKAGIETIRYVDNVEKAVPVAFELSEPGDVILLSPACASWDQYKTFEERGDIFINAVHKLK.

Position 119–125 (119–125 (GSNGKTT)) interacts with ATP.

This sequence belongs to the MurCDEF family.

It localises to the cytoplasm. It carries out the reaction UDP-N-acetyl-alpha-D-muramoyl-L-alanine + D-glutamate + ATP = UDP-N-acetyl-alpha-D-muramoyl-L-alanyl-D-glutamate + ADP + phosphate + H(+). The protein operates within cell wall biogenesis; peptidoglycan biosynthesis. Its function is as follows. Cell wall formation. Catalyzes the addition of glutamate to the nucleotide precursor UDP-N-acetylmuramoyl-L-alanine (UMA). The sequence is that of UDP-N-acetylmuramoylalanine--D-glutamate ligase from Geobacillus kaustophilus (strain HTA426).